A 228-amino-acid polypeptide reads, in one-letter code: Aspartate racemase (228 aa).

Residue 47–49 (DRT) coordinates substrate. The Proton donor/acceptor role is filled by Cys82. Residues 83 to 85 (NTA) and Lys164 each bind substrate. Residue Cys194 is the Proton donor/acceptor of the active site.

This sequence belongs to the aspartate/glutamate racemases family. As to quaternary structure, homodimer. The existence of the interchain disulfide bond seen in the crystal structures is uncertain, but disulfide bonds have been reported for cytoplasmic proteins from thermophiles.

The catalysed reaction is L-aspartate = D-aspartate. Its activity is regulated as follows. Weakly inhibited by citrate, but not by asparagine. This chain is Aspartate racemase, found in Pyrococcus horikoshii (strain ATCC 700860 / DSM 12428 / JCM 9974 / NBRC 100139 / OT-3).